Consider the following 1776-residue polypeptide: Signal-induced proliferation-associated 1-like protein 3 (1776 aa).

Disordered regions lie at residues A41 to F157 and P240 to R325. Over residues P54 to P69 the composition is skewed to low complexity. 2 stretches are compositionally biased toward polar residues: residues E89–T99 and R112–S129. S94 is modified (phosphoserine). Residues A131 to S140 are compositionally biased toward basic residues. A Phosphoserine modification is found at S140. Residues G257–Q268 are compositionally biased toward polar residues. S394 bears the Phosphoserine mark. The segment at S438–H461 is disordered. Residues L605–L822 enclose the Rap-GAP domain. The PDZ domain maps to D960–S1024. Disordered regions lie at residues P1040–L1104, R1117–A1164, and D1184–G1632. 2 stretches are compositionally biased toward polar residues: residues A1074–L1104 and P1151–S1160. Residues D1190–G1201 are compositionally biased toward low complexity. Basic and acidic residues predominate over residues S1239–G1255. A compositionally biased stretch (low complexity) spans S1260–S1275. Positions G1298–C1316 are enriched in polar residues. Positions S1344–V1357 are enriched in basic and acidic residues. Phosphoserine is present on S1358. T1381 bears the Phosphothreonine mark. Residues V1409–P1436 are compositionally biased toward polar residues. An N6-acetyllysine modification is found at K1442. Basic and acidic residues predominate over residues T1503 to I1512. 2 stretches are compositionally biased toward polar residues: residues G1526 to S1541 and L1566 to L1578. Residues S1538 and S1541 each carry the phosphoserine modification. Positions P1589 to G1601 are enriched in low complexity. S1614 and S1617 each carry phosphoserine. Positions D1620–D1630 are enriched in basic and acidic residues. Position 1672 is a phosphoserine (S1672). The disordered stretch occupies residues A1678–S1705. Phosphothreonine occurs at positions 1694 and 1698. Positions Q1715–F1769 form a coiled coil.

The protein localises to the apical cell membrane. Functionally, plays a critical role in epithelial cell morphogenesis, polarity, adhesion and cytoskeletal organization in the lens. The polypeptide is Signal-induced proliferation-associated 1-like protein 3 (Sipa1l3) (Mus musculus (Mouse)).